Here is a 63-residue protein sequence, read N- to C-terminus: UPF0434 protein Sde_1297 (63 aa).

The protein belongs to the UPF0434 family.

This Saccharophagus degradans (strain 2-40 / ATCC 43961 / DSM 17024) protein is UPF0434 protein Sde_1297.